The following is a 20-amino-acid chain: 35 kDa cell wall protein (20 aa).

The protein localises to the secreted. The protein resides in the cell wall. In Phaseolus vulgaris (Kidney bean), this protein is 35 kDa cell wall protein.